The chain runs to 421 residues: MDIFKKQESNVRSYSNNFPVVFRKAKGCWLETEQGERYLDFLAGAGSLNYGHNNPVLKQALLEYIEMDGITHGLDMHSEAKAGFLAALDNYILKPRKLDYKVQFTGPTGTNAVEAALKLAKKVKGRSSVVAFTNGFHGCTAGALAATGNQHHRQGNGSSLTNVTRIPFEGYAGVDGLALFETMLNDNSAGMDKPAAVLLETVQGEGGLNAASNEWLQRLSKICKANDILLIVDDIQAGCGRTGTFFSFEPSGIEPDIVTLSKSIGGYGLPMAVVLLKPELDQWKPGEHNGTFRGNNHAFITAAKALEIYWSNDDFETHIKQCSQNVSEVIDRCVRRFPQMFVQKKGRGMMIGIECIHGDLAAEIAKACFDDGMVIETAGPDDEVVKFFCPLTISESELNQGLSIFERAVETIAAKHFKQAS.

Position 262 is an N6-(pyridoxal phosphate)lysine (lysine 262).

It belongs to the class-III pyridoxal-phosphate-dependent aminotransferase family. Requires pyridoxal 5'-phosphate as cofactor.

It carries out the reaction L-2,4-diaminobutanoate + 2-oxoglutarate = L-aspartate 4-semialdehyde + L-glutamate. It functions in the pathway amine and polyamine biosynthesis; ectoine biosynthesis; L-ectoine from L-aspartate 4-semialdehyde: step 1/3. In terms of biological role, catalyzes reversively the conversion of L-aspartate beta-semialdehyde (ASA) to L-2,4-diaminobutyrate (DABA) by transamination with L-glutamate. This chain is Diaminobutyrate--2-oxoglutarate transaminase (ectB), found in Vibrio parahaemolyticus serotype O3:K6 (strain RIMD 2210633).